Here is a 74-residue protein sequence, read N- to C-terminus: Small ribosomal subunit protein eS28 (74 aa).

It belongs to the eukaryotic ribosomal protein eS28 family.

This is Small ribosomal subunit protein eS28 from Halobacterium salinarum (strain ATCC 29341 / DSM 671 / R1).